The following is a 122-amino-acid chain: Large ribosomal subunit protein uL14 (122 aa).

This sequence belongs to the universal ribosomal protein uL14 family. As to quaternary structure, part of the 50S ribosomal subunit. Forms a cluster with proteins L3 and L19. In the 70S ribosome, L14 and L19 interact and together make contacts with the 16S rRNA in bridges B5 and B8.

Its function is as follows. Binds to 23S rRNA. Forms part of two intersubunit bridges in the 70S ribosome. The protein is Large ribosomal subunit protein uL14 of Chromobacterium violaceum (strain ATCC 12472 / DSM 30191 / JCM 1249 / CCUG 213 / NBRC 12614 / NCIMB 9131 / NCTC 9757 / MK).